Reading from the N-terminus, the 412-residue chain is MKAARFVMRSASSLGNAGLVPREVELFSRYSPSPLSMKQLLDFGSENACERTSFSFLRQELPVRLANILKEIDILPEHLVNTPSVQLVKSWYIQSLMDLVEFHEKSPEDQKVLSDFVDTLVKVRNRHHNVVPTMAQGILEYKDNCTVDPVTNQNLQYFLDRFYMNRISTRMLMNQHILIFSDSKTGNPSHIGSIDPNCDVVAVVEDAFECAKMLCDQYYLTSPELKLTQVNGKFPGQPIHIVYVPSHLHHMLFELFKNAMRATVEHQENRPFLTPVEATVVLGKEDLTIKISDRGGGVPLRITDRLFSYTYSTAPTPVMDNSRNAPLAGFGYGLPISRLYAKYFQGDLNLYSMSGYGTDAIIYLKALSSESIEKLPVFNKSAFKHYQMSSEADDWCIPSKEPKNLSKEKLAV.

One can recognise a Histidine kinase domain in the interval 138–368 (ILEYKDNCTV…DAIIYLKALS (231 aa)). ATP-binding positions include 254–261 (ELFKNAMR), Asp293, 312–313 (ST), and 329–334 (GFGYGL).

Belongs to the PDK/BCKDK protein kinase family. Homodimer. Interacts with the pyruvate dehydrogenase complex subunit DLAT, and is part of the multimeric pyruvate dehydrogenase complex that contains multiple copies of pyruvate dehydrogenase (E1), dihydrolipoamide acetyltransferase (DLAT, E2) and lipoamide dehydrogenase (DLD, E3). As to expression, ubiquitous; highest levels of expression in heart and skeletal muscle.

The protein localises to the mitochondrion matrix. It catalyses the reaction L-seryl-[pyruvate dehydrogenase E1 alpha subunit] + ATP = O-phospho-L-seryl-[pyruvate dehydrogenase E1 alpha subunit] + ADP + H(+). Kinase that plays a key role in regulation of glucose and fatty acid metabolism and homeostasis via phosphorylation of the pyruvate dehydrogenase subunits PDHA1 and PDHA2. This inhibits pyruvate dehydrogenase activity, and thereby regulates metabolite flux through the tricarboxylic acid cycle, down-regulates aerobic respiration and inhibits the formation of acetyl-coenzyme A from pyruvate. Inhibition of pyruvate dehydrogenase decreases glucose utilization and increases fat metabolism in response to prolonged fasting and starvation. Plays an important role in maintaining normal blood glucose levels under starvation, and is involved in the insulin signaling cascade. Via its regulation of pyruvate dehydrogenase activity, plays an important role in maintaining normal blood pH and in preventing the accumulation of ketone bodies under starvation. In the fed state, mediates cellular responses to glucose levels and to a high-fat diet. Regulates both fatty acid oxidation and de novo fatty acid biosynthesis. Plays a role in the generation of reactive oxygen species. Protects detached epithelial cells against anoikis. Plays a role in cell proliferation via its role in regulating carbohydrate and fatty acid metabolism. This is [Pyruvate dehydrogenase (acetyl-transferring)] kinase isozyme 4, mitochondrial (Pdk4) from Rattus norvegicus (Rat).